The primary structure comprises 273 residues: Putative phosphoenolpyruvate synthase regulatory protein (273 aa).

Position 153 to 160 (153 to 160 (GVSRCGKT)) interacts with ADP.

It belongs to the pyruvate, phosphate/water dikinase regulatory protein family. PSRP subfamily.

The catalysed reaction is [pyruvate, water dikinase] + ADP = [pyruvate, water dikinase]-phosphate + AMP + H(+). The enzyme catalyses [pyruvate, water dikinase]-phosphate + phosphate + H(+) = [pyruvate, water dikinase] + diphosphate. Functionally, bifunctional serine/threonine kinase and phosphorylase involved in the regulation of the phosphoenolpyruvate synthase (PEPS) by catalyzing its phosphorylation/dephosphorylation. The polypeptide is Putative phosphoenolpyruvate synthase regulatory protein (Yersinia enterocolitica serotype O:8 / biotype 1B (strain NCTC 13174 / 8081)).